Reading from the N-terminus, the 333-residue chain is MKRLISGIQPTNNLTLGNYLGAIKNFVDLQDDYEVFLFVADLHSLTPNIFDNTDFSTTKRQIIATYLAAGIDPKKTCLFYQSDILSIPLLAHILLCSTSIGELTRMTQFKDKSIKATKMANNTEMIPSGLLTYPTLMAADILTFNADVVPVGQDQKQHLELTRTLADRFNKRYGNTFKLPQVYIPKIGAKIMDLLDPNIKMSKSSKNLKGVIFLNDSKDIIFKKIKGALTDNLNKVKYDLTLQPGVSNLMTIYACLTNLSFKEIELKYQQQNYGVFKNDLANIVADFLEKLQQKISYWLNSPELDIMIDNSCERANDIAYQNVQLVLKHMQLK.

ATP-binding positions include 9-11 (QPT) and 17-18 (GN). Residues 10-18 (PTNNLTLGN) carry the 'HIGH' region motif. Asp140 provides a ligand contact to L-tryptophan. Residues 152–154 (GQD), Ile191, and 200–204 (KMSKS) contribute to the ATP site. A 'KMSKS' region motif is present at residues 200-204 (KMSKS).

Belongs to the class-I aminoacyl-tRNA synthetase family. As to quaternary structure, homodimer.

The protein resides in the cytoplasm. It catalyses the reaction tRNA(Trp) + L-tryptophan + ATP = L-tryptophyl-tRNA(Trp) + AMP + diphosphate + H(+). Catalyzes the attachment of tryptophan to tRNA(Trp). This chain is Tryptophan--tRNA ligase, found in Ureaplasma parvum serovar 3 (strain ATCC 700970).